Consider the following 1116-residue polypeptide: MAP kinase kinase kinase mkh1 (1116 aa).

Disordered regions lie at residues 510–601 (LKMP…SNSL) and 618–647 (ALDESDLSGDPFWAIQPKQSSSQVPKENHH). Residues 515–531 (NSGSSAPQSPSSNTSAS) show a composition bias toward low complexity. Over residues 553–569 (LRRKNTLTRRPSIRHAR) the composition is skewed to basic residues. Low complexity predominate over residues 588–601 (SFDPKASSKSSNSL). Positions 634–647 (PKQSSSQVPKENHH) are enriched in polar residues. The Protein kinase domain occupies 825–1094 (WMKGELIGNG…AEELLNHPFM (270 aa)). ATP is bound by residues 831–839 (IGNGTYGKV) and K854. The active-site Proton acceptor is the D955.

It belongs to the protein kinase superfamily. STE Ser/Thr protein kinase family. MAP kinase kinase kinase subfamily.

The enzyme catalyses L-seryl-[protein] + ATP = O-phospho-L-seryl-[protein] + ADP + H(+). It carries out the reaction L-threonyl-[protein] + ATP = O-phospho-L-threonyl-[protein] + ADP + H(+). Its function is as follows. May regulate cell morphology, cell wall integrity, salt resistance, cell cycle reentry from stationary-phase arrest, and filamentous growth in response to stress. Activates the MAP kinase kinase skh1/pek1 by phosphorylation. The chain is MAP kinase kinase kinase mkh1 (mkh1) from Schizosaccharomyces pombe (strain 972 / ATCC 24843) (Fission yeast).